Here is a 77-residue protein sequence, read N- to C-terminus: NAD(P)H-quinone oxidoreductase subunit L (77 aa).

The next 2 helical transmembrane spans lie at Leu-12 to Tyr-32 and Leu-47 to Leu-67.

This sequence belongs to the complex I NdhL subunit family. In terms of assembly, NDH-1 can be composed of about 15 different subunits; different subcomplexes with different compositions have been identified which probably have different functions.

It is found in the cellular thylakoid membrane. The enzyme catalyses a plastoquinone + NADH + (n+1) H(+)(in) = a plastoquinol + NAD(+) + n H(+)(out). It catalyses the reaction a plastoquinone + NADPH + (n+1) H(+)(in) = a plastoquinol + NADP(+) + n H(+)(out). In terms of biological role, NDH-1 shuttles electrons from an unknown electron donor, via FMN and iron-sulfur (Fe-S) centers, to quinones in the respiratory and/or the photosynthetic chain. The immediate electron acceptor for the enzyme in this species is believed to be plastoquinone. Couples the redox reaction to proton translocation, and thus conserves the redox energy in a proton gradient. Cyanobacterial NDH-1 also plays a role in inorganic carbon-concentration. This chain is NAD(P)H-quinone oxidoreductase subunit L, found in Prochlorococcus marinus (strain MIT 9312).